We begin with the raw amino-acid sequence, 584 residues long: MATRRRSFPLVPLLLFLLAAAAYGRLISDGSPASASATSLLSNPVSAVIRLTTSNSASASSPPAAAPEEKCEQSYGFLPCTTTVLGNLFLVLAYGFLMYKAATFLSAGSELLLEIMGPGLVGGLLLPILGALPDALLVLVSGLSGSRETAQSQVLIGMGLLAGSTVFLLTLLWGTCVVVGKCDIGPNGVAVDLQNNKGFSLTGTGISTDVQTSYAARIMGISVIPFIIAQFPKMLKTHHGQRLAVLLALIVSFSLVLAYCLYQVFQPWIQKRKLAYAKHKHVISGILRHAQMEALGRLLNEDGTPNEDVIKKLFHKIDMDESQTLSRAELHALIIGINFEEVDFDKNDAVDKIMDDFDTSGNDIVEEAEFVSGMKRWLNEAKRSVPTSGAYSNKFITDYHARTRQEHDLLVDRSDETVESVENPGWCITKAVGLLLLGSAIAAAFADPLVDAVHNFSNASHIPSFFISFIALPLATNSSEAVSAIIFASRKKLRTSSLTFSEVYGGVTMNNTLCLGVFLALIYIRNLTWDFSSEVLIILLVCVIMGLFTSFRTTFPLWTCLVAYMLYPLSLVVVYILDFVFGWS.

5 helical membrane passes run 77–97 (FLPC…YGFL), 120–140 (LVGG…LVLV), 154–174 (VLIG…LLWG), 215–235 (AARI…PKML), and 245–265 (VLLA…YQVF). EF-hand domains lie at 305-340 (PNED…INFE) and 345-380 (DKND…WLNE). 9 residues coordinate Ca(2+): D318, D320, S322, T324, E329, D358, S360, N362, and E369. 5 consecutive transmembrane segments (helical) span residues 426–446 (WCIT…AAFA), 466–486 (FISF…SAII), 504–524 (YGGV…LIYI), 531–551 (FSSE…FTSF), and 561–581 (LVAY…DFVF).

Belongs to the Ca(2+):cation antiporter (CaCA) (TC 2.A.19) family.

It is found in the cell membrane. In terms of biological role, may function as a sodium/calcium exchanger (NCX) and participate in the maintenance of calcium homeostasis. May play a role abiotic stress responses. The sequence is that of Sodium/calcium exchanger NCL1 from Oryza sativa subsp. japonica (Rice).